Consider the following 205-residue polypeptide: Glycerol-3-phosphate acyltransferase (205 aa).

A run of 6 helical transmembrane segments spans residues 7 to 27, 54 to 74, 80 to 100, 116 to 136, 141 to 161, and 163 to 183; these read MTALVLAGYLSGSLLGAVWVC, VVPAALTLGVDAAKAMPVLWV, LPIWAQGAVGLSVLVGHSYPL, VLLMIATPVAWVCALCWALLA, TAAVASLAAALLAPLASYWLA, and EATLVVSVFSALVLVRHAWNI.

Belongs to the PlsY family. In terms of assembly, probably interacts with PlsX.

Its subcellular location is the cell inner membrane. The catalysed reaction is an acyl phosphate + sn-glycerol 3-phosphate = a 1-acyl-sn-glycero-3-phosphate + phosphate. The protein operates within lipid metabolism; phospholipid metabolism. In terms of biological role, catalyzes the transfer of an acyl group from acyl-phosphate (acyl-PO(4)) to glycerol-3-phosphate (G3P) to form lysophosphatidic acid (LPA). This enzyme utilizes acyl-phosphate as fatty acyl donor, but not acyl-CoA or acyl-ACP. The chain is Glycerol-3-phosphate acyltransferase from Chromohalobacter salexigens (strain ATCC BAA-138 / DSM 3043 / CIP 106854 / NCIMB 13768 / 1H11).